The sequence spans 196 residues: Kunitz trypsin inhibitor 5 (196 aa).

The N-terminal stretch at 1–19 is a signal peptide; the sequence is MSSLLYIFLLLAVFISHRG. The cysteines at positions 156 and 167 are disulfide-linked.

The protein belongs to the protease inhibitor I3 (leguminous Kunitz-type inhibitor) family.

Its subcellular location is the endoplasmic reticulum. Can inhibit both serine proteases and cysteine proteases. May be involved in the modulation of the proteases that participate in the hydrolysis of dietary proteins in the gut of spider mites. The protein is Kunitz trypsin inhibitor 5 of Arabidopsis thaliana (Mouse-ear cress).